Reading from the N-terminus, the 357-residue chain is Trans-enoyl reductase buaC (357 aa).

50 to 53 (VDTK) is a binding site for NADP(+). 135 to 142 (TALVSACM) lines the substrate pocket. Residues 170 to 173 (STAT), 193 to 196 (SPKN), Tyr-211, and 258 to 259 (LN) each bind NADP(+). 278-282 (ATLIT) is a binding site for substrate. 347–348 (IS) provides a ligand contact to NADP(+).

The protein belongs to the zinc-containing alcohol dehydrogenase family. In terms of assembly, monomer.

It participates in mycotoxin biosynthesis. Its function is as follows. Trans-enoyl reductase; part of the gene cluster that mediates the biosynthesis of burnettramic acids, an unusual class of bolaamphiphilic pyrrolizidinediones that display potent antibacterial, antifungal, and cytotoxic activities. The first step of the biosynthesis of burnettramic acids is the hydroxylation of proline by the proline hydroxylase buaE to generate 4-hydroxyproline. The PKS-NRPS buaA and trans-enoyl reductase buaC construct the highly reduced polyketide chain, and the condensation (C) domain of buaA then catalyzes the amide bond formation with the activated 4-hydroxyproline. This is followed by the R domain releasing the nascent polyketide-peptide directly via a Dieckmann condensation to afford a tetramic acid fused to the hydroxyproline, generating the bicyclic pyrrolidinedione moiety. The cytochrome P450 monooxygenases buaD and buaG are likely responsible for the multiple hydroxylations on the polyketide chain and its terminus, although in the heterologous context, buaD does not appear to be required. Therefore, while buaG may be a multifunctional cytochrome P450 monooxygenase, it cannot be ruled out that the two secondary alcohols on the polyketide chain could have an acetate origin. Finally, the glycosyltransferase buaB transfers beta-D-mannose to the aglycone burnettramic acid A to form burnettramic acid A. Burnettramic acid B is a minor cis-pyrrolizidine epimer of burnettramic acid A and it is likely that small amounts of it form naturally in acidic environments. This Petromyces alliaceus (Aspergillus alliaceus) protein is Trans-enoyl reductase buaC.